Reading from the N-terminus, the 342-residue chain is Isopentenyl-diphosphate delta-isomerase (342 aa).

11-12 is a substrate binding site; the sequence is RK. FMN is bound by residues Ser68, 69 to 71, Ser99, and Asn127; that span reads SMT. Residue 99-101 coordinates substrate; the sequence is SMR. Gln162 is a binding site for substrate. Glu163 provides a ligand contact to Mg(2+). Residues Lys194, Thr224, 274 to 276, and 295 to 296 contribute to the FMN site; these read GLK and AG.

It belongs to the IPP isomerase type 2 family. Homooctamer. Dimer of tetramers. Requires FMN as cofactor. The cofactor is NADPH. It depends on Mg(2+) as a cofactor.

It is found in the cytoplasm. The enzyme catalyses isopentenyl diphosphate = dimethylallyl diphosphate. Functionally, involved in the biosynthesis of isoprenoids. Catalyzes the 1,3-allylic rearrangement of the homoallylic substrate isopentenyl (IPP) to its allylic isomer, dimethylallyl diphosphate (DMAPP). The chain is Isopentenyl-diphosphate delta-isomerase from Rickettsia akari (strain Hartford).